A 286-amino-acid polypeptide reads, in one-letter code: DegV domain-containing protein M6_Spy1658 (286 aa).

The 280-residue stretch at 3 to 282 (FTIMTDSTAD…PNTLAVFVIG (280 aa)) folds into the DegV domain. Residues Thr-62 and Ser-94 each contribute to the hexadecanoate site.

In terms of biological role, may bind long-chain fatty acids, such as palmitate, and may play a role in lipid transport or fatty acid metabolism. This is DegV domain-containing protein M6_Spy1658 from Streptococcus pyogenes serotype M6 (strain ATCC BAA-946 / MGAS10394).